We begin with the raw amino-acid sequence, 216 residues long: Ras-related protein YPTC6 (216 aa).

G19–S26 serves as a coordination point for GTP. Residues S41–F49 carry the Effector region motif. Residues D67 to Q71 and N125 to D128 each bind GTP. S-geranylgeranyl cysteine attachment occurs at residues C214 and C215.

It belongs to the small GTPase superfamily. Rab family.

The protein localises to the cell membrane. The protein is Ras-related protein YPTC6 (YPTC6) of Chlamydomonas reinhardtii (Chlamydomonas smithii).